Reading from the N-terminus, the 253-residue chain is Decarboxylase DEC1 (253 aa).

Catalysis depends on K121, which acts as the Schiff-base intermediate with acetoacetate.

This sequence belongs to the ADC family.

Its pathway is mycotoxin biosynthesis. Its function is as follows. Decarboxylase; part of the Tox1B locus, one of the 2 loci that mediate the biosynthesis of T-toxin, a family of linear polyketides 37 to 45 carbons in length, of which the major component is 41 carbons, and which leads to high virulence to maize. One of the PKSs (PKS1 or PKS2) could synthesize a precursor, used subsequently by the other PKS as starter unit, to add additional carbons. Variability in the length of the final carbon backbone C35-47 could be achieved by varying the number of condensation cycles, or use of different starter or extender units or might be due to decarboxylation of the penultimate product, catalyzed by DEC1. Additional proteins are required for the biosynthesis of T-toxin, including oxidoreductases RED1, RED2, RED3, LAM1 and OXI1, as well as esterase TOX9. This is Decarboxylase DEC1 from Cochliobolus heterostrophus (strain C4 / ATCC 48331 / race T) (Southern corn leaf blight fungus).